We begin with the raw amino-acid sequence, 407 residues long: Serine/threonine transporter SstT (407 aa).

The next 9 membrane-spanning stretches (helical) occupy residues 12–32 (GNLI…GISS), 42–62 (LGIL…FILI), 81–101 (IIIL…LANF), 141–161 (ALSS…GIAL), 179–199 (VLKI…GLVA), 218–238 (ILLV…IVFF), 245–267 (FPLI…SSAA), 288–308 (ISIP…IAIL), and 330–350 (IIAT…LLLI).

Belongs to the dicarboxylate/amino acid:cation symporter (DAACS) (TC 2.A.23) family.

The protein resides in the cell inner membrane. The catalysed reaction is L-serine(in) + Na(+)(in) = L-serine(out) + Na(+)(out). The enzyme catalyses L-threonine(in) + Na(+)(in) = L-threonine(out) + Na(+)(out). Involved in the import of serine and threonine into the cell, with the concomitant import of sodium (symport system). The sequence is that of Serine/threonine transporter SstT from Campylobacter jejuni subsp. jejuni serotype O:2 (strain ATCC 700819 / NCTC 11168).